Reading from the N-terminus, the 181-residue chain is ATP-dependent protease subunit HslV (181 aa).

Thr6 is a catalytic residue. Residues Ala162, Cys165, and Thr168 each contribute to the Na(+) site.

This sequence belongs to the peptidase T1B family. HslV subfamily. As to quaternary structure, a double ring-shaped homohexamer of HslV is capped on each side by a ring-shaped HslU homohexamer. The assembly of the HslU/HslV complex is dependent on binding of ATP.

The protein resides in the cytoplasm. The enzyme catalyses ATP-dependent cleavage of peptide bonds with broad specificity.. Its activity is regulated as follows. Allosterically activated by HslU binding. Protease subunit of a proteasome-like degradation complex believed to be a general protein degrading machinery. This chain is ATP-dependent protease subunit HslV, found in Solidesulfovibrio magneticus (strain ATCC 700980 / DSM 13731 / RS-1) (Desulfovibrio magneticus).